The primary structure comprises 84 residues: Large ribosomal subunit protein bL27 (84 aa).

The interval 1–20 is disordered; that stretch reads MAHKKGGGSTKNGRDSNPKY.

It belongs to the bacterial ribosomal protein bL27 family.

This Prosthecochloris vibrioformis (Chlorobium vibrioforme) protein is Large ribosomal subunit protein bL27 (rpmA).